The chain runs to 140 residues: Ribosome-binding factor A (140 aa).

Positions 1 to 13 are enriched in basic residues; the sequence is MQKKSSSKSHRAT. Residues 1–22 are disordered; the sequence is MQKKSSSKSHRATRGPSQRQLR.

This sequence belongs to the RbfA family. Monomer. Binds 30S ribosomal subunits, but not 50S ribosomal subunits or 70S ribosomes.

It is found in the cytoplasm. Functionally, one of several proteins that assist in the late maturation steps of the functional core of the 30S ribosomal subunit. Associates with free 30S ribosomal subunits (but not with 30S subunits that are part of 70S ribosomes or polysomes). Required for efficient processing of 16S rRNA. May interact with the 5'-terminal helix region of 16S rRNA. The protein is Ribosome-binding factor A of Parvibaculum lavamentivorans (strain DS-1 / DSM 13023 / NCIMB 13966).